The primary structure comprises 384 residues: Probable zinc-binding alcohol dehydrogenase Rv1895 (384 aa).

Zn(2+) contacts are provided by Cys38, His59, Cys89, Cys92, Cys95, and Cys103.

The protein belongs to the zinc-containing alcohol dehydrogenase family. Requires Zn(2+) as cofactor.

It carries out the reaction a primary alcohol + NAD(+) = an aldehyde + NADH + H(+). The catalysed reaction is a secondary alcohol + NAD(+) = a ketone + NADH + H(+). The sequence is that of Probable zinc-binding alcohol dehydrogenase Rv1895 from Mycobacterium tuberculosis (strain ATCC 25618 / H37Rv).